The following is a 921-amino-acid chain: Isoleucine--tRNA ligase (921 aa).

Positions 57 to 67 (PYANGDIHMGH) match the 'HIGH' region motif. An L-isoleucyl-5'-AMP-binding site is contributed by Glu-552. The 'KMSKS' region motif lies at 593–597 (KMSKS). Residue Lys-596 coordinates ATP. 4 residues coordinate Zn(2+): Cys-888, Cys-891, Cys-908, and Cys-911.

The protein belongs to the class-I aminoacyl-tRNA synthetase family. IleS type 1 subfamily. As to quaternary structure, monomer. Zn(2+) serves as cofactor.

It localises to the cytoplasm. The enzyme catalyses tRNA(Ile) + L-isoleucine + ATP = L-isoleucyl-tRNA(Ile) + AMP + diphosphate. Catalyzes the attachment of isoleucine to tRNA(Ile). As IleRS can inadvertently accommodate and process structurally similar amino acids such as valine, to avoid such errors it has two additional distinct tRNA(Ile)-dependent editing activities. One activity is designated as 'pretransfer' editing and involves the hydrolysis of activated Val-AMP. The other activity is designated 'posttransfer' editing and involves deacylation of mischarged Val-tRNA(Ile). The polypeptide is Isoleucine--tRNA ligase (Bacillus cereus (strain AH820)).